The primary structure comprises 1317 residues: Toxin protein Tse5 (1317 aa).

The tract at residues 395-419 (GRETRRRRDGQGRMLEEESPGKARY) is disordered. Positions 403-415 (DGQGRMLEEESPG) are enriched in basic and acidic residues.

In terms of biological role, toxin secreted by the H1 type VI (H1-T6SS) secretion system that acts on bacterial target cells. The producing bacterium is protected by a cognate immunity protein. This Pseudomonas aeruginosa (strain ATCC 15692 / DSM 22644 / CIP 104116 / JCM 14847 / LMG 12228 / 1C / PRS 101 / PAO1) protein is Toxin protein Tse5.